A 374-amino-acid polypeptide reads, in one-letter code: Spore germination protein GerLB (374 aa).

The next 10 membrane-spanning stretches (helical) occupy residues 16-36, 44-64, 86-106, 122-142, 149-169, 192-212, 227-247, 279-301, 313-333, and 341-361; these read IGFAVSSTIIGIGALSMPRDI, DGWIILLLGGLICAVLGWFVT, PVAYTISSILVLTFAALTAYE, TPIQLLSFFFLLVVIYGIAGS, LNVLFLPIVLIAIVLLSLLNI, VKNSIFTFIGFEVALFYAVLL, AVMVNVLSYILIYVTCISVFT, FFTTWIITIYNTTAMYYDVASLL, IFIFISAPIIFMVNMIPSSLN, and YLAWIDMGCVVLAPLLVLIVY.

It belongs to the amino acid-polyamine-organocation (APC) superfamily. Spore germination protein (SGP) (TC 2.A.3.9) family.

The protein resides in the membrane. Contributes to the L-alanine germination response. This Bacillus cereus protein is Spore germination protein GerLB (gerLB).